The following is a 471-amino-acid chain: Ribulose bisphosphate carboxylase large chain (471 aa).

Lys-5 carries the N6,N6,N6-trimethyllysine modification. Substrate is bound by residues Asn-114 and Thr-164. The active-site Proton acceptor is Lys-166. Substrate is bound at residue Lys-168. Mg(2+) contacts are provided by Lys-192, Asp-194, and Glu-195. Position 192 is an N6-carboxylysine (Lys-192). The active-site Proton acceptor is His-285. Substrate-binding residues include Arg-286, His-318, and Ser-370.

This sequence belongs to the RuBisCO large chain family. Type I subfamily. In terms of assembly, heterohexadecamer of 8 large chains and 8 small chains; disulfide-linked. The disulfide link is formed within the large subunit homodimers. Mg(2+) serves as cofactor. The disulfide bond which can form in the large chain dimeric partners within the hexadecamer appears to be associated with oxidative stress and protein turnover.

It is found in the plastid. Its subcellular location is the chloroplast. It carries out the reaction 2 (2R)-3-phosphoglycerate + 2 H(+) = D-ribulose 1,5-bisphosphate + CO2 + H2O. The catalysed reaction is D-ribulose 1,5-bisphosphate + O2 = 2-phosphoglycolate + (2R)-3-phosphoglycerate + 2 H(+). Functionally, ruBisCO catalyzes two reactions: the carboxylation of D-ribulose 1,5-bisphosphate, the primary event in carbon dioxide fixation, as well as the oxidative fragmentation of the pentose substrate in the photorespiration process. Both reactions occur simultaneously and in competition at the same active site. The chain is Ribulose bisphosphate carboxylase large chain from Deppea grandiflora.